Here is a 234-residue protein sequence, read N- to C-terminus: N-acetyl-alpha-D-glucosaminyl L-malate deacetylase 1 (234 aa).

Positions 12, 15, and 113 each coordinate Zn(2+).

This sequence belongs to the PIGL family. As to quaternary structure, homohexamer. Trimer of dimers. Zn(2+) is required as a cofactor.

The enzyme catalyses (S)-malyl N-acetyl-alpha-D-glucosaminide + H2O = (S)-malyl alpha-D-glucosaminide + acetate. Functionally, involved in bacillithiol (BSH) biosynthesis. Catalyzes the second step of the pathway, the deacetylation of N-acetylglucosaminylmalate (GlcNAc-Mal) to glucosamine malate (GlcN-Mal). The protein is N-acetyl-alpha-D-glucosaminyl L-malate deacetylase 1 of Bacillus cereus (strain ATCC 14579 / DSM 31 / CCUG 7414 / JCM 2152 / NBRC 15305 / NCIMB 9373 / NCTC 2599 / NRRL B-3711).